The chain runs to 507 residues: MSGTSPPTPKDHITMVDHDYSDCSEDVSLIGADREHRRSSTPDGLYQHKINRHYNPLYIAVVASLTFLITDIAGQIIVAPRLAIFEHIICKAYYTQVSGAAGTGMGDCKVEPVQSELALINGWREMFDNIPGTSYTLDRFGRKKVLLIAMVGCLLSDIWVGVVTWFPDTFPLRAVWFSGIWQLIGGGGASISSMAFAMIADSCPADLRTTAFSQVHAAVLVAELVSVPAGAALANFNPWIPVFGAAIFMVLGILFAYVVVPDVRPAGSKREGGSDGDFLSSAQESHPTWLMSIHHRWRKIVDEFRKDSSWIRDVNVLLIMASFFVCQLGRMISGITLQYAAAKFHWKFDKASLLVSLRAGVNLFVLAAIIPALSYILVKRFKLNDVVKDKRITQINGVCLIIGSFVMFLAASPGTLVFGQTVFALGFAFSVTARSFLTGMVDPMHIGTVFTGVTTMLYGGLVIGSPMLAKTLQWGLQLGGIWVGLPFLLAAVLFTLALGAISAARSY.

11 helical membrane passes run 59–79 (IAVV…IIVA), 146–166 (LLIA…VTWF), 180–200 (IWQL…AMIA), 216–236 (HAAV…LANF), 240–260 (IPVF…YVVV), 316–336 (VLLI…SGIT), 359–379 (AGVN…ILVK), 398–418 (VCLI…TLVF), 421–441 (TVFA…TGMV), 449–469 (VFTG…PMLA), and 481–501 (IWVG…LGAI).

This sequence belongs to the major facilitator superfamily.

Its subcellular location is the cell membrane. It functions in the pathway mycotoxin biosynthesis. Its function is as follows. Efflux pump; part of the gene cluster that mediates the biosynthesis of the secondary metabolite ustiloxin B, an antimitotic tetrapeptide. Probably involved in self-resistance through the export of ustiloxin B. The chain is Efflux pump ustT from Aspergillus flavus (strain ATCC 200026 / FGSC A1120 / IAM 13836 / NRRL 3357 / JCM 12722 / SRRC 167).